The primary structure comprises 416 residues: Enterobactin exporter EntS (416 aa).

Over 1–21 (MNKQSWLLNLSLLKTHPAFRA) the chain is Cytoplasmic. A helical transmembrane segment spans residues 22-42 (VFLARFISIVSLGLLGVAVPV). Residues 43–55 (QIQMMTHSTWQVG) are Periplasmic-facing. The chain crosses the membrane as a helical span at residues 56–76 (LSVTLTGGAMFVGLMVGGVLA). Topologically, residues 77–83 (DRYERKK) are cytoplasmic. A helical transmembrane segment spans residues 84 to 104 (VILLARGTCGIGFIGLCLNAL). Topologically, residues 105 to 109 (LPEPS) are periplasmic. The chain crosses the membrane as a helical span at residues 110–130 (LLAIYLLGLWDGFFASLGVTA). The Cytoplasmic segment spans residues 131–156 (LLAATPALVGRENLMQAGAITMLTVR). Residues 157-177 (LGSVISPMIGGLLLATGGVAW) form a helical membrane-spanning segment. Residue N178 is a topological domain, periplasmic. The helical transmembrane segment at 179–199 (YGLAAAGTFITLLPLLSLPAL) threads the bilayer. Residues 200 to 218 (PPPPQPREHPLKSLLAGFR) lie on the Cytoplasmic side of the membrane. A helical membrane pass occupies residues 219-239 (FLLASPLVGGIALLGGLLTMA). The Periplasmic segment spans residues 240–256 (SAVRVLYPALADNWQMS). The helical transmembrane segment at 257–277 (AAQIGFLYAAIPLGAAIGALT) threads the bilayer. Over 278 to 287 (SGKLAHSARP) the chain is Cytoplasmic. Residues 288-307 (GLLMLLSTLGSFLAIGLFGL) traverse the membrane as a helical segment. The Periplasmic segment spans residues 308–313 (MPMWIL). Residues 314–336 (GVVCLALFGWLSAVSSLLQYTML) form a helical membrane-spanning segment. At 337–356 (QTQTPEAMLGRINGLWTAQN) the chain is on the cytoplasmic side. A helical transmembrane segment spans residues 357–377 (VTGDAIGAALLGGLGAMMTPV). A378 is a topological domain (periplasmic). Residues 379 to 399 (SASASGFGLLIIGVLLLLVLV) traverse the membrane as a helical segment. Topologically, residues 400 to 416 (ELRRFRQTPPQVTASDS) are cytoplasmic.

Belongs to the major facilitator superfamily. EntS (TC 2.A.1.38) family.

The protein resides in the cell inner membrane. Its function is as follows. Component of an export pathway for enterobactin. This Escherichia coli (strain 55989 / EAEC) protein is Enterobactin exporter EntS.